We begin with the raw amino-acid sequence, 201 residues long: Protease (201 aa).

Active-site residues include H55, D72, and C122.

This sequence belongs to the peptidase C5 family. Interacts with protease cofactor pVI-C; this interaction is necessary for protease activation.

The protein resides in the virion. It is found in the host nucleus. It carries out the reaction Cleaves proteins of the adenovirus and its host cell at two consensus sites: -Yaa-Xaa-Gly-Gly-|-Xaa- and -Yaa-Xaa-Gly-Xaa-|-Gly- (in which Yaa is Met, Ile or Leu, and Xaa is any amino acid).. Requires DNA and protease cofactor for maximal activation. Inside nascent virions, becomes partially activated by binding to the viral DNA, allowing it to cleave the cofactor that binds to the protease and fully activates it. Actin, like the viral protease cofactor, seems to act as a cofactor in the cleavage of cytokeratin 18 and of actin itself. In terms of biological role, cleaves viral precursor proteins (pTP, pIIIa, pVI, pVII, pVIII, and pX) inside newly assembled particles giving rise to mature virions. Protease complexed to its cofactor slides along the viral DNA to specifically locate and cleave the viral precursors. Mature virions have a weakened organization compared to the unmature virions, thereby facilitating subsequent uncoating. Without maturation, the particle lacks infectivity and is unable to uncoat. Late in adenovirus infection, in the cytoplasm, may participate in the cytoskeleton destruction. Cleaves host cell cytoskeletal keratins K7 and K18. The protein is Protease of Bovine adenovirus 4 (BAdV-4).